The following is a 146-amino-acid chain: Acetyl-CoA decarbonylase/synthase complex subunit epsilon (146 aa).

The protein belongs to the CdhB family. Heterotetramer of two alpha and two epsilon subunits. The ACDS complex is made up of alpha, epsilon, beta, gamma and delta subunits with a probable stoichiometry of (alpha(2)epsilon(2))(4)-beta(8)-(gamma(1)delta(1))(8).

Part of a complex that catalyzes the reversible cleavage of acetyl-CoA, allowing autotrophic growth from CO(2). The alpha-epsilon subcomponent functions as a carbon monoxide dehydrogenase. The precise role of the epsilon subunit is unclear; it may have a stabilizing role within the alpha(2)epsilon(2) component and/or be involved in electron transfer to FAD during a potential FAD-mediated CO oxidation. The sequence is that of Acetyl-CoA decarbonylase/synthase complex subunit epsilon from Methanocaldococcus jannaschii (strain ATCC 43067 / DSM 2661 / JAL-1 / JCM 10045 / NBRC 100440) (Methanococcus jannaschii).